The chain runs to 489 residues: Ubiquitin-like-specific protease ESD4 (489 aa).

The disordered stretch occupies residues 43–66 (AMSEDSGKPASSNPTISRISRYPD). Positions 51 to 60 (PASSNPTISR) are enriched in polar residues. Positions 200–223 (ASSLEAYRKLMQSAEKRNSKLEAL) form a coiled coil. Residues histidine 380, aspartate 397, and cysteine 448 contribute to the active site.

Belongs to the peptidase C48 family. Interacts with NUA (via N-terminus). Interacts with KIN10. Expressed in seedlings, leaves, shoots, flowers and roots.

It is found in the nucleus membrane. The catalysed reaction is Hydrolysis of the alpha-linked peptide bond in the sequence Gly-Gly-|-Ala-Thr-Tyr at the C-terminal end of the small ubiquitin-like modifier (SUMO) propeptide, Smt3, leading to the mature form of the protein. A second reaction involves the cleavage of an epsilon-linked peptide bond between the C-terminal glycine of the mature SUMO and the lysine epsilon-amino group of the target protein.. With respect to regulation, inhibited by thiol reagent and N-ethylmaleimide, but not by ubiquitin aldehyde, pepstatin A or benzamidine HCl. In terms of biological role, protease that catalyzes two essential functions in the SUMO pathway: processing of full-length SUMOs to their mature forms and deconjugation of SUMO from targeted proteins. Cleaves precursors of SUM1 and SUM2, but not of SUM3 or SUM5. Able to release SUM1 and SUM2 from conjugates, but unable to cleave SUM3. Acts predominantly as an isopeptidase, cleaving SUMO-conjugated proteins better than SUMO peptides. Plays an important role in the control of flowering time. The protein is Ubiquitin-like-specific protease ESD4 (ESD4) of Arabidopsis thaliana (Mouse-ear cress).